Here is a 564-residue protein sequence, read N- to C-terminus: Phosphoinositide phospholipase C 3 (564 aa).

Residues 19 to 54 enclose the EF-hand domain; it reads TRQPPVSIKRLFEAYSRNGKMSFDELLRFVSEVQGE. The PI-PLC X-box domain maps to 106–250; it reads HDMKAPLSHY…LKGKILISTK (145 aa). Active-site residues include histidine 121 and histidine 167. In terms of domain architecture, PI-PLC Y-box spans 296 to 412; that stretch reads RDLIAIHAAN…GYVKKPRILL (117 aa). The C2 domain occupies 406-539; sequence KKPRILLDEH…KSGVRAVRLH (134 aa). Ca(2+)-binding residues include aspartate 450, aspartate 456, aspartate 509, aspartate 511, and aspartate 517.

Ca(2+) is required as a cofactor. As to expression, expressed in leaves, roots and siliques, but not in flowers.

The protein localises to the cell membrane. It catalyses the reaction a 1,2-diacyl-sn-glycero-3-phospho-(1D-myo-inositol-4,5-bisphosphate) + H2O = 1D-myo-inositol 1,4,5-trisphosphate + a 1,2-diacyl-sn-glycerol + H(+). Its function is as follows. The production of the second messenger molecules diacylglycerol (DAG) and inositol 1,4,5-trisphosphate (IP3) is mediated by activated phosphatidylinositol-specific phospholipase C enzymes. In Arabidopsis thaliana (Mouse-ear cress), this protein is Phosphoinositide phospholipase C 3 (PLC3).